A 421-amino-acid chain; its full sequence is UDP-N-acetylglucosamine 1-carboxyvinyltransferase (421 aa).

A phosphoenolpyruvate-binding site is contributed by 22-23 (KN). Arg-95 contributes to the UDP-N-acetyl-alpha-D-glucosamine binding site. The active-site Proton donor is the Cys-119. Position 119 is a 2-(S-cysteinyl)pyruvic acid O-phosphothioketal (Cys-119). Residues 124–128 (RPVDQ), Asp-309, and Ile-331 contribute to the UDP-N-acetyl-alpha-D-glucosamine site.

Belongs to the EPSP synthase family. MurA subfamily.

Its subcellular location is the cytoplasm. The enzyme catalyses phosphoenolpyruvate + UDP-N-acetyl-alpha-D-glucosamine = UDP-N-acetyl-3-O-(1-carboxyvinyl)-alpha-D-glucosamine + phosphate. It functions in the pathway cell wall biogenesis; peptidoglycan biosynthesis. In terms of biological role, cell wall formation. Adds enolpyruvyl to UDP-N-acetylglucosamine. This Leptothrix cholodnii (strain ATCC 51168 / LMG 8142 / SP-6) (Leptothrix discophora (strain SP-6)) protein is UDP-N-acetylglucosamine 1-carboxyvinyltransferase.